An 80-amino-acid chain; its full sequence is UPF0291 protein YlaC (80 aa).

It belongs to the UPF0291 family.

The protein resides in the cytoplasm. This chain is UPF0291 protein YlaC (ylcA), found in Lactococcus lactis subsp. lactis (strain IL1403) (Streptococcus lactis).